A 379-amino-acid chain; its full sequence is Chaperone protein DnaJ (379 aa).

A J domain is found at Cys-7–Gly-72. The CR-type zinc-finger motif lies at Gly-135–Glu-213. 8 residues coordinate Zn(2+): Cys-148, Cys-151, Cys-165, Cys-168, Cys-187, Cys-190, Cys-201, and Cys-204. CXXCXGXG motif repeat units lie at residues Cys-148–Gly-155, Cys-165–Gly-172, Cys-187–Gly-194, and Cys-201–Gly-208.

The protein belongs to the DnaJ family. As to quaternary structure, homodimer. Zn(2+) serves as cofactor.

The protein localises to the cytoplasm. Its function is as follows. Participates actively in the response to hyperosmotic and heat shock by preventing the aggregation of stress-denatured proteins and by disaggregating proteins, also in an autonomous, DnaK-independent fashion. Unfolded proteins bind initially to DnaJ; upon interaction with the DnaJ-bound protein, DnaK hydrolyzes its bound ATP, resulting in the formation of a stable complex. GrpE releases ADP from DnaK; ATP binding to DnaK triggers the release of the substrate protein, thus completing the reaction cycle. Several rounds of ATP-dependent interactions between DnaJ, DnaK and GrpE are required for fully efficient folding. Also involved, together with DnaK and GrpE, in the DNA replication of plasmids through activation of initiation proteins. This is Chaperone protein DnaJ from Rhodopseudomonas palustris (strain BisB18).